Reading from the N-terminus, the 127-residue chain is Aspartate 1-decarboxylase (127 aa).

Ser25 acts as the Schiff-base intermediate with substrate; via pyruvic acid in catalysis. Ser25 bears the Pyruvic acid (Ser) mark. Thr57 serves as a coordination point for substrate. Tyr58 functions as the Proton donor in the catalytic mechanism. Substrate is bound at residue 73-75 (GAA).

The protein belongs to the PanD family. In terms of assembly, heterooctamer of four alpha and four beta subunits. Pyruvate is required as a cofactor. Post-translationally, is synthesized initially as an inactive proenzyme, which is activated by self-cleavage at a specific serine bond to produce a beta-subunit with a hydroxyl group at its C-terminus and an alpha-subunit with a pyruvoyl group at its N-terminus.

Its subcellular location is the cytoplasm. The enzyme catalyses L-aspartate + H(+) = beta-alanine + CO2. Its pathway is cofactor biosynthesis; (R)-pantothenate biosynthesis; beta-alanine from L-aspartate: step 1/1. In terms of biological role, catalyzes the pyruvoyl-dependent decarboxylation of aspartate to produce beta-alanine. The chain is Aspartate 1-decarboxylase from Bacillus cereus (strain B4264).